Consider the following 370-residue polypeptide: Peptidyl-prolyl cis-trans isomerase D (370 aa).

Serine 5 is modified (phosphoserine). Residues 19–183 (FFDVDIGGER…KLCVIAECGE (165 aa)) form the PPIase cyclophilin-type domain. N6-acetyllysine is present on lysine 171. The segment at 185–215 (KEGDEWGIFPKDGSGDSHPDFPEDADIDLKD) is chaperone activity. Phosphoserine is present on serine 198. Residues 214 to 370 (KDVDKILLIS…EKAVYAKMFA (157 aa)) form an interaction with HSP90AB1 region. TPR repeat units lie at residues 223 to 256 (SEDL…LDSS), 273 to 306 (LSCV…DPSN), and 308 to 340 (KALY…APGD).

Belongs to the cyclophilin-type PPIase family. PPIase D subfamily. In terms of assembly, identified in ESR1 or NR3C1/GCR steroid receptor-chaperone complexes. Found in HSP90 chaperone complexes with kinase clients LCK or EIF2AK1. Two monomers associate with one HSP90 homodimer. Interacts with HSP90AA1. Interacts with HSP90AB1; PPID and FKBP4 compete for binding to HSP90AB1 and the interaction is mutually exclusive with the PPID:HSPA8 interaction. Interacts with HSPA8; PPID and STIP1 but not FKBP4 compete for binding to HSPA8 and the interaction is mutually exclusive with the PPID:HSP90AB1 interaction. Interacts with S100A1 and S100A2; the interactions dissociate the PPID:HSP90AA1 interaction. Interacts with S100A6. Interacts with MYB, ILF2, XRCC6, RACK1 and RPS3. Interacts with cytoplasmic dynein 1 intermediate chain (DYNC1I1 or DYNC1I2).

It is found in the cytoplasm. It localises to the nucleus. The protein localises to the nucleolus. The protein resides in the nucleoplasm. The enzyme catalyses [protein]-peptidylproline (omega=180) = [protein]-peptidylproline (omega=0). With respect to regulation, less sensitive to inhibition by cyclosporin A than is CYP-18. PPIase that catalyzes the cis-trans isomerization of proline imidic peptide bonds in oligopeptides and may therefore assist protein folding. Proposed to act as a co-chaperone in HSP90 complexes such as in unligated steroid receptors heterocomplexes. Different co-chaperones seem to compete for association with HSP90 thus establishing distinct HSP90-co-chaperone-receptor complexes with the potential to exert tissue-specific receptor activity control. May have a preference for estrogen receptor complexes and is not found in glucocorticoid receptor complexes. May be involved in cytoplasmic dynein-dependent movement of the receptor from the cytoplasm to the nucleus. May regulate MYB by inhibiting its DNA-binding activity. Involved in regulation of AHR signaling by promoting the formation of the AHR:ARNT dimer; the function is independent of HSP90 but requires the chaperone activity region. Involved in regulation of UV radiation-induced apoptosis. The protein is Peptidyl-prolyl cis-trans isomerase D of Rattus norvegicus (Rat).